The sequence spans 191 residues: Elongation factor P 1 (191 aa).

It belongs to the elongation factor P family.

The protein localises to the cytoplasm. It participates in protein biosynthesis; polypeptide chain elongation. Its function is as follows. Involved in peptide bond synthesis. Stimulates efficient translation and peptide-bond synthesis on native or reconstituted 70S ribosomes in vitro. Probably functions indirectly by altering the affinity of the ribosome for aminoacyl-tRNA, thus increasing their reactivity as acceptors for peptidyl transferase. In Lactobacillus acidophilus (strain ATCC 700396 / NCK56 / N2 / NCFM), this protein is Elongation factor P 1.